A 227-amino-acid polypeptide reads, in one-letter code: Cytochrome c oxidase subunit 2 (227 aa).

The Mitochondrial intermembrane segment spans residues 1–14 (MAYPFQLGLQDASS). The chain crosses the membrane as a helical span at residues 15-45 (PIMEELMNFHDHTLMIVFLISSLVLYLMALM). Residues 46–59 (LSTKLIHTSTMDAQ) are Mitochondrial matrix-facing. The chain crosses the membrane as a helical span at residues 60–87 (EVETIWTILPAIILIMIALPSLRILYMM). Residues 88–227 (DEINNPILTV…LFENWSMSMT (140 aa)) are Mitochondrial intermembrane-facing. Residues His161, Cys196, Glu198, Cys200, His204, and Met207 each contribute to the Cu cation site. Glu198 serves as a coordination point for Mg(2+).

It belongs to the cytochrome c oxidase subunit 2 family. Component of the cytochrome c oxidase (complex IV, CIV), a multisubunit enzyme composed of 14 subunits. The complex is composed of a catalytic core of 3 subunits MT-CO1, MT-CO2 and MT-CO3, encoded in the mitochondrial DNA, and 11 supernumerary subunits COX4I, COX5A, COX5B, COX6A, COX6B, COX6C, COX7A, COX7B, COX7C, COX8 and NDUFA4, which are encoded in the nuclear genome. The complex exists as a monomer or a dimer and forms supercomplexes (SCs) in the inner mitochondrial membrane with NADH-ubiquinone oxidoreductase (complex I, CI) and ubiquinol-cytochrome c oxidoreductase (cytochrome b-c1 complex, complex III, CIII), resulting in different assemblies (supercomplex SCI(1)III(2)IV(1) and megacomplex MCI(2)III(2)IV(2)). Found in a complex with TMEM177, COA6, COX18, COX20, SCO1 and SCO2. Interacts with TMEM177 in a COX20-dependent manner. Interacts with COX20. Interacts with COX16. It depends on Cu cation as a cofactor.

It is found in the mitochondrion inner membrane. The catalysed reaction is 4 Fe(II)-[cytochrome c] + O2 + 8 H(+)(in) = 4 Fe(III)-[cytochrome c] + 2 H2O + 4 H(+)(out). Component of the cytochrome c oxidase, the last enzyme in the mitochondrial electron transport chain which drives oxidative phosphorylation. The respiratory chain contains 3 multisubunit complexes succinate dehydrogenase (complex II, CII), ubiquinol-cytochrome c oxidoreductase (cytochrome b-c1 complex, complex III, CIII) and cytochrome c oxidase (complex IV, CIV), that cooperate to transfer electrons derived from NADH and succinate to molecular oxygen, creating an electrochemical gradient over the inner membrane that drives transmembrane transport and the ATP synthase. Cytochrome c oxidase is the component of the respiratory chain that catalyzes the reduction of oxygen to water. Electrons originating from reduced cytochrome c in the intermembrane space (IMS) are transferred via the dinuclear copper A center (CU(A)) of subunit 2 and heme A of subunit 1 to the active site in subunit 1, a binuclear center (BNC) formed by heme A3 and copper B (CU(B)). The BNC reduces molecular oxygen to 2 water molecules using 4 electrons from cytochrome c in the IMS and 4 protons from the mitochondrial matrix. The protein is Cytochrome c oxidase subunit 2 (MT-CO2) of Gerbillus gerbillus (Lesser Egyptian gerbil).